Here is a 451-residue protein sequence, read N- to C-terminus: Serine--tRNA ligase (451 aa).

258–260 (TSE) contacts L-serine. 289 to 291 (RSE) is an ATP binding site. Glutamate 312 is an L-serine binding site. 376–379 (EISS) is a binding site for ATP. Residue serine 411 coordinates L-serine.

Belongs to the class-II aminoacyl-tRNA synthetase family. Type-1 seryl-tRNA synthetase subfamily. As to quaternary structure, homodimer. The tRNA molecule binds across the dimer.

The protein localises to the cytoplasm. It carries out the reaction tRNA(Ser) + L-serine + ATP = L-seryl-tRNA(Ser) + AMP + diphosphate + H(+). It catalyses the reaction tRNA(Sec) + L-serine + ATP = L-seryl-tRNA(Sec) + AMP + diphosphate + H(+). Its pathway is aminoacyl-tRNA biosynthesis; selenocysteinyl-tRNA(Sec) biosynthesis; L-seryl-tRNA(Sec) from L-serine and tRNA(Sec): step 1/1. Functionally, catalyzes the attachment of serine to tRNA(Ser). Is also able to aminoacylate tRNA(Sec) with serine, to form the misacylated tRNA L-seryl-tRNA(Sec), which will be further converted into selenocysteinyl-tRNA(Sec). The sequence is that of Serine--tRNA ligase from Bordetella pertussis (strain Tohama I / ATCC BAA-589 / NCTC 13251).